Consider the following 200-residue polypeptide: Tegument protein UL55 homolog (200 aa).

The segment covering 1 to 20 has biased composition (basic and acidic residues); the sequence is MLPANRAEHSSDAEPRDIGS. The segment at 1 to 23 is disordered; it reads MLPANRAEHSSDAEPRDIGSHGR.

The protein belongs to the alphaherpesvirinae HHV-1 UL55 family.

It is found in the virion tegument. Its subcellular location is the host nucleus matrix. This is Tegument protein UL55 homolog from Equine herpesvirus 1 (strain Ab4p) (EHV-1).